The chain runs to 163 residues: Nucleotide-binding protein CYA_0935 (163 aa).

Belongs to the YajQ family.

Nucleotide-binding protein. The protein is Nucleotide-binding protein CYA_0935 of Synechococcus sp. (strain JA-3-3Ab) (Cyanobacteria bacterium Yellowstone A-Prime).